Reading from the N-terminus, the 451-residue chain is tRNA-2-methylthio-N(6)-dimethylallyladenosine synthase (451 aa).

Positions 3 to 120 (KKLFIQTHGC…LPEMVNAAGK (118 aa)) constitute an MTTase N-terminal domain. Residues cysteine 12, cysteine 49, cysteine 83, cysteine 156, cysteine 160, and cysteine 163 each coordinate [4Fe-4S] cluster. In terms of domain architecture, Radical SAM core spans 142–374 (RVEGAEAFVS…QRRISQQAYD (233 aa)). The TRAM domain occupies 377 to 441 (LSMVGEVQRI…PNSLLGELVG (65 aa)).

Belongs to the methylthiotransferase family. MiaB subfamily. As to quaternary structure, monomer. Requires [4Fe-4S] cluster as cofactor.

The protein resides in the cytoplasm. The enzyme catalyses N(6)-dimethylallyladenosine(37) in tRNA + (sulfur carrier)-SH + AH2 + 2 S-adenosyl-L-methionine = 2-methylsulfanyl-N(6)-dimethylallyladenosine(37) in tRNA + (sulfur carrier)-H + 5'-deoxyadenosine + L-methionine + A + S-adenosyl-L-homocysteine + 2 H(+). Functionally, catalyzes the methylthiolation of N6-(dimethylallyl)adenosine (i(6)A), leading to the formation of 2-methylthio-N6-(dimethylallyl)adenosine (ms(2)i(6)A) at position 37 in tRNAs that read codons beginning with uridine. The polypeptide is tRNA-2-methylthio-N(6)-dimethylallyladenosine synthase (Marinomonas sp. (strain MWYL1)).